The chain runs to 259 residues: UPF0246 protein PputW619_0896 (259 aa).

Belongs to the UPF0246 family.

The chain is UPF0246 protein PputW619_0896 from Pseudomonas putida (strain W619).